The chain runs to 72 residues: Sec-independent protein translocase protein TatA (72 aa).

A helical transmembrane segment spans residues 1-21 (MAGLSIWHVVIFAIVVILLFG). Residues 47–72 (DEAASLNSPRTIDAQVKTSESTSVKS) form a disordered region. The span at 51-72 (SLNSPRTIDAQVKTSESTSVKS) shows a compositional bias: polar residues.

This sequence belongs to the TatA/E family. In terms of assembly, the Tat system comprises two distinct complexes: a TatABC complex, containing multiple copies of TatA, TatB and TatC subunits, and a separate TatA complex, containing only TatA subunits. Substrates initially bind to the TatABC complex, which probably triggers association of the separate TatA complex to form the active translocon.

Its subcellular location is the cell inner membrane. Its function is as follows. Part of the twin-arginine translocation (Tat) system that transports large folded proteins containing a characteristic twin-arginine motif in their signal peptide across membranes. TatA could form the protein-conducting channel of the Tat system. This is Sec-independent protein translocase protein TatA from Acinetobacter baumannii (strain AB307-0294).